Here is a 186-residue protein sequence, read N- to C-terminus: Peptidyl-tRNA hydrolase (186 aa).

Residue Tyr14 coordinates tRNA. The active-site Proton acceptor is the His19. The tRNA site is built by Tyr64, Asn66, and Asn112.

This sequence belongs to the PTH family. Monomer.

The protein resides in the cytoplasm. The enzyme catalyses an N-acyl-L-alpha-aminoacyl-tRNA + H2O = an N-acyl-L-amino acid + a tRNA + H(+). Hydrolyzes ribosome-free peptidyl-tRNAs (with 1 or more amino acids incorporated), which drop off the ribosome during protein synthesis, or as a result of ribosome stalling. Its function is as follows. Catalyzes the release of premature peptidyl moieties from peptidyl-tRNA molecules trapped in stalled 50S ribosomal subunits, and thus maintains levels of free tRNAs and 50S ribosomes. The chain is Peptidyl-tRNA hydrolase from Bacillus cereus (strain Q1).